Reading from the N-terminus, the 469-residue chain is Sulfate adenylyltransferase subunit 1 (469 aa).

One can recognise a tr-type G domain in the interval 22–237 (KEVLRFITCG…LEEVPVKSEE (216 aa)). Residues 31–38 (GSVDDGKS) are G1. Residue 31–38 (GSVDDGKS) participates in GTP binding. The tract at residues 89–93 (GITID) is G2. The tract at residues 110 to 113 (DTPG) is G3. GTP is bound by residues 110–114 (DTPGH) and 165–168 (NKMD). Residues 165–168 (NKMD) form a G4 region. Residues 202–204 (SAK) form a G5 region.

This sequence belongs to the TRAFAC class translation factor GTPase superfamily. Classic translation factor GTPase family. CysN/NodQ subfamily. Heterodimer composed of CysD, the smaller subunit, and CysN.

The enzyme catalyses sulfate + ATP + H(+) = adenosine 5'-phosphosulfate + diphosphate. It participates in sulfur metabolism; hydrogen sulfide biosynthesis; sulfite from sulfate: step 1/3. Its function is as follows. With CysD forms the ATP sulfurylase (ATPS) that catalyzes the adenylation of sulfate producing adenosine 5'-phosphosulfate (APS) and diphosphate, the first enzymatic step in sulfur assimilation pathway. APS synthesis involves the formation of a high-energy phosphoric-sulfuric acid anhydride bond driven by GTP hydrolysis by CysN coupled to ATP hydrolysis by CysD. The protein is Sulfate adenylyltransferase subunit 1 of Methylorubrum extorquens (strain PA1) (Methylobacterium extorquens).